The sequence spans 626 residues: tRNA uridine 5-carboxymethylaminomethyl modification enzyme MnmG (626 aa).

FAD is bound at residue 13 to 18; the sequence is GGGHAG. 273–287 lines the NAD(+) pocket; that stretch reads GPRYCPSIEDKIHRF.

The protein belongs to the MnmG family. As to quaternary structure, homodimer. Heterotetramer of two MnmE and two MnmG subunits. It depends on FAD as a cofactor.

The protein localises to the cytoplasm. Its function is as follows. NAD-binding protein involved in the addition of a carboxymethylaminomethyl (cmnm) group at the wobble position (U34) of certain tRNAs, forming tRNA-cmnm(5)s(2)U34. This is tRNA uridine 5-carboxymethylaminomethyl modification enzyme MnmG from Acinetobacter baumannii (strain ACICU).